Consider the following 262-residue polypeptide: Ornithine carbamoyltransferase (262 aa).

Carbamoyl phosphate is bound by residues 3–7 (STRTR), Gln30, Arg54, and 81–84 (HPTQ). L-ornithine-binding positions include Asn114, Asp178, and 182–183 (SM). Carbamoyl phosphate-binding positions include 219–222 (HCLP) and Thr247.

The protein belongs to the aspartate/ornithine carbamoyltransferase superfamily. OTCase family.

It localises to the cytoplasm. It catalyses the reaction carbamoyl phosphate + L-ornithine = L-citrulline + phosphate + H(+). The protein operates within amino-acid biosynthesis; L-arginine biosynthesis; L-arginine from L-ornithine and carbamoyl phosphate: step 1/3. It functions in the pathway amino-acid degradation; L-arginine degradation via ADI pathway; carbamoyl phosphate from L-arginine: step 2/2. Functionally, reversibly catalyzes the transfer of the carbamoyl group from carbamoyl phosphate (CP) to the N(epsilon) atom of ornithine (ORN) to produce L-citrulline. In Neisseria meningitidis, this protein is Ornithine carbamoyltransferase (argF).